We begin with the raw amino-acid sequence, 392 residues long: Alanine--glyoxylate aminotransferase (392 aa).

N6-(pyridoxal phosphate)lysine is present on K209. K225 is subject to N6-acetyllysine; alternate. N6-succinyllysine; alternate is present on K225. N6-acetyllysine is present on residues K234 and K312. R360 is a binding site for substrate. A Microbody targeting signal motif is present at residues 390-392 (KKL).

It belongs to the class-V pyridoxal-phosphate-dependent aminotransferase family. As to quaternary structure, homodimer. Pyridoxal 5'-phosphate serves as cofactor.

The protein localises to the peroxisome. The catalysed reaction is L-serine + pyruvate = 3-hydroxypyruvate + L-alanine. It carries out the reaction glyoxylate + L-alanine = glycine + pyruvate. Its function is as follows. Peroxisomal aminotransferase that catalyzes the transamination of glyoxylate to glycine and contributes to the glyoxylate detoxification. Also catalyzes the transamination between L-serine and pyruvate and contributes to gluconeogenesis from the L-serine metabolism. This chain is Alanine--glyoxylate aminotransferase, found in Pongo abelii (Sumatran orangutan).